A 500-amino-acid chain; its full sequence is 4-aminobutyrate aminotransferase, mitochondrial (500 aa).

The transit peptide at 1–28 (MASMLLAQRLACSFQHSYRLLVPGSRHI) directs the protein to the mitochondrion. Cysteine 163 provides a ligand contact to [2Fe-2S] cluster. Position 164–165 (164–165 (GS)) interacts with pyridoxal 5'-phosphate. Residue cysteine 166 participates in [2Fe-2S] cluster binding. Arginine 220 lines the substrate pocket. At lysine 231 the chain carries N6-succinyllysine. Residue lysine 252 is modified to N6-acetyllysine; alternate. The residue at position 252 (lysine 252) is an N6-succinyllysine; alternate. Lysine 279 and lysine 318 each carry N6-acetyllysine. Residue lysine 357 is modified to N6-(pyridoxal phosphate)lysine. Residue threonine 381 participates in pyridoxal 5'-phosphate binding. Lysine 413 bears the N6-acetyllysine; alternate mark. Lysine 413 carries the N6-succinyllysine; alternate modification. N6-acetyllysine is present on residues lysine 452 and lysine 470.

This sequence belongs to the class-III pyridoxal-phosphate-dependent aminotransferase family. As to quaternary structure, homodimer; disulfide-linked. Requires pyridoxal 5'-phosphate as cofactor. The cofactor is [2Fe-2S] cluster. Liver &gt; pancreas &gt; brain &gt; kidney &gt; heart &gt; placenta.

The protein localises to the mitochondrion matrix. The catalysed reaction is 4-aminobutanoate + 2-oxoglutarate = succinate semialdehyde + L-glutamate. It catalyses the reaction (S)-3-amino-2-methylpropanoate + 2-oxoglutarate = 2-methyl-3-oxopropanoate + L-glutamate. Its function is as follows. Catalyzes the conversion of gamma-aminobutyrate and L-beta-aminoisobutyrate to succinate semialdehyde and methylmalonate semialdehyde, respectively. Can also convert delta-aminovalerate and beta-alanine. In Homo sapiens (Human), this protein is 4-aminobutyrate aminotransferase, mitochondrial.